The chain runs to 292 residues: Small ribosomal subunit biogenesis GTPase RsgA (292 aa).

Residues 64–221 (RSELFRPAVA…LVDTPGFSSL (158 aa)) form the CP-type G domain. GTP-binding positions include 113-116 (NKMD) and 164-172 (GPSGVGKST). Zn(2+)-binding residues include C245, C250, H252, and C258.

It belongs to the TRAFAC class YlqF/YawG GTPase family. RsgA subfamily. As to quaternary structure, monomer. Associates with 30S ribosomal subunit, binds 16S rRNA. The cofactor is Zn(2+).

The protein resides in the cytoplasm. One of several proteins that assist in the late maturation steps of the functional core of the 30S ribosomal subunit. Helps release RbfA from mature subunits. May play a role in the assembly of ribosomal proteins into the subunit. Circularly permuted GTPase that catalyzes slow GTP hydrolysis, GTPase activity is stimulated by the 30S ribosomal subunit. The protein is Small ribosomal subunit biogenesis GTPase RsgA of Clostridium botulinum (strain 657 / Type Ba4).